We begin with the raw amino-acid sequence, 378 residues long: UPF0754 membrane protein BCE33L0760 (378 aa).

The next 2 membrane-spanning stretches (helical) occupy residues Met1–Thr21 and Tyr357–Leu377.

Belongs to the UPF0754 family.

The protein localises to the cell membrane. The sequence is that of UPF0754 membrane protein BCE33L0760 from Bacillus cereus (strain ZK / E33L).